The chain runs to 389 residues: Phospho-N-acetylmuramoyl-pentapeptide-transferase (389 aa).

The next 10 helical transmembrane spans lie at 25–45 (RAVMATVTALLIGLAAGPWVI), 73–93 (TMGGVLILIGIFISCILWADL), 97–117 (FIWIVMIVTFGFGLVGWVDDY), 134–154 (FFWQTLIGLFAAIYLAFSVSE), 190–210 (VSYPLGIMGFIILSYLVIVGS), 222–242 (GLVIMPVILVGAALGAFAYVM), 258–278 (GAGELMIFCGAMGGAGLAFLW), 286–306 (VFMGDVGALALGGALGTIAVI), 311–331 (IVLFVMGGIFVAETISVMLQV), and 366–386 (QVVVRFWIITILLVLIGLSSL).

Belongs to the glycosyltransferase 4 family. MraY subfamily. It depends on Mg(2+) as a cofactor.

The protein resides in the cell inner membrane. The enzyme catalyses UDP-N-acetyl-alpha-D-muramoyl-L-alanyl-gamma-D-glutamyl-meso-2,6-diaminopimeloyl-D-alanyl-D-alanine + di-trans,octa-cis-undecaprenyl phosphate = di-trans,octa-cis-undecaprenyl diphospho-N-acetyl-alpha-D-muramoyl-L-alanyl-D-glutamyl-meso-2,6-diaminopimeloyl-D-alanyl-D-alanine + UMP. It participates in cell wall biogenesis; peptidoglycan biosynthesis. Its function is as follows. Catalyzes the initial step of the lipid cycle reactions in the biosynthesis of the cell wall peptidoglycan: transfers peptidoglycan precursor phospho-MurNAc-pentapeptide from UDP-MurNAc-pentapeptide onto the lipid carrier undecaprenyl phosphate, yielding undecaprenyl-pyrophosphoryl-MurNAc-pentapeptide, known as lipid I. The sequence is that of Phospho-N-acetylmuramoyl-pentapeptide-transferase from Polynucleobacter necessarius subsp. necessarius (strain STIR1).